The primary structure comprises 305 residues: Coiled-coil domain-containing protein 69-A (305 aa).

Residue Gly-2 is the site of N-myristoyl glycine attachment. The segment at 13–38 is disordered; the sequence is LRKKKRQKAHQGGLTSQELNDLNAKT. Positions 25-38 are enriched in polar residues; that stretch reads GLTSQELNDLNAKT. Residues 42 to 281 are a coiled coil; it reads NEVLQKIKEY…QREKEQNLYR (240 aa).

The protein belongs to the CCDC69 family.

Its subcellular location is the cytoplasm. The protein resides in the cytoskeleton. It is found in the spindle. The protein localises to the midbody. Its function is as follows. May act as a scaffold to regulate the recruitment and assembly of spindle midzone components. The polypeptide is Coiled-coil domain-containing protein 69-A (ccdc69-a) (Xenopus laevis (African clawed frog)).